Here is a 269-residue protein sequence, read N- to C-terminus: Holocytochrome-c synthase (269 aa).

Residues 1-72 form a disordered region; sequence MGWFWADQKT…ASKQPGQKMD (72 aa). HRM repeat units lie at residues 25-30 and 41-46; these read GCPVMH and ECPVMQ.

It belongs to the cytochrome c-type heme lyase family.

The protein localises to the mitochondrion inner membrane. Its subcellular location is the mitochondrion intermembrane space. The catalysed reaction is holo-[cytochrome c] = apo-[cytochrome c] + heme b. Functionally, lyase that catalyzes the covalent linking of the heme group to the cytochrome C apoprotein to produce the mature functional cytochrome. The protein is Holocytochrome-c synthase (CYC3) of Saccharomyces cerevisiae (strain ATCC 204508 / S288c) (Baker's yeast).